Here is a 247-residue protein sequence, read N- to C-terminus: MAGHSKWANIKHRKAAQDAKRGKMFTKMIREITTAARLGGPDGGSNPRLRAAVAAALSINMTRDTVDRAIKRGAGGDDGVELETLVYEGYGPSGTAVMVECMTDNRNRTVAGVRHAFSKSGGALGTDGSVAYLFTKKGILSFTSADEDALMEAALEAGADDVETNDDGSIDVYTSPNDFGTVLDALEAAGFKPDNANVSMIPSTEVDLNADDAPKLLRLIDMLEDLDDVQEVYHNGTISDEVAATLE.

The segment at 1 to 21 (MAGHSKWANIKHRKAAQDAKR) is disordered.

The protein belongs to the TACO1 family.

It localises to the cytoplasm. In Tolumonas auensis (strain DSM 9187 / NBRC 110442 / TA 4), this protein is Probable transcriptional regulatory protein Tola_2714.